Consider the following 328-residue polypeptide: Tryptophan--tRNA ligase (328 aa).

ATP is bound by residues 9-11 (QPS) and 17-18 (GN). The 'HIGH' region motif lies at 10 to 18 (PSGVITIGN). Asp-132 contacts L-tryptophan. Residues 144-146 (GED), Ile-183, and 192-196 (KMSKS) each bind ATP. Positions 192 to 196 (KMSKS) match the 'KMSKS' region motif.

The protein belongs to the class-I aminoacyl-tRNA synthetase family. In terms of assembly, homodimer.

It localises to the cytoplasm. The catalysed reaction is tRNA(Trp) + L-tryptophan + ATP = L-tryptophyl-tRNA(Trp) + AMP + diphosphate + H(+). Inhibited by indolmycin, a competitive inhibitor for tryptophan. In terms of biological role, catalyzes the attachment of tryptophan to tRNA(Trp). The sequence is that of Tryptophan--tRNA ligase from Geobacillus stearothermophilus (Bacillus stearothermophilus).